We begin with the raw amino-acid sequence, 498 residues long: ATP synthase subunit beta, chloroplastic (498 aa).

172 to 179 (GGAGVGKT) is a binding site for ATP.

The protein belongs to the ATPase alpha/beta chains family. As to quaternary structure, F-type ATPases have 2 components, CF(1) - the catalytic core - and CF(0) - the membrane proton channel. CF(1) has five subunits: alpha(3), beta(3), gamma(1), delta(1), epsilon(1). CF(0) has four main subunits: a(1), b(1), b'(1) and c(9-12).

It is found in the plastid. Its subcellular location is the chloroplast thylakoid membrane. The catalysed reaction is ATP + H2O + 4 H(+)(in) = ADP + phosphate + 5 H(+)(out). Functionally, produces ATP from ADP in the presence of a proton gradient across the membrane. The catalytic sites are hosted primarily by the beta subunits. The chain is ATP synthase subunit beta, chloroplastic from Cinnamomum camphora (Camphor tree).